The chain runs to 174 residues: NADH-quinone oxidoreductase subunit B (174 aa).

Residues Cys53, Cys54, Cys118, and Cys148 each contribute to the [4Fe-4S] cluster site.

Belongs to the complex I 20 kDa subunit family. In terms of assembly, NDH-1 is composed of 14 different subunits. Subunits NuoB, C, D, E, F, and G constitute the peripheral sector of the complex. It depends on [4Fe-4S] cluster as a cofactor.

Its subcellular location is the cell inner membrane. The catalysed reaction is a quinone + NADH + 5 H(+)(in) = a quinol + NAD(+) + 4 H(+)(out). In terms of biological role, NDH-1 shuttles electrons from NADH, via FMN and iron-sulfur (Fe-S) centers, to quinones in the respiratory chain. Couples the redox reaction to proton translocation (for every two electrons transferred, four hydrogen ions are translocated across the cytoplasmic membrane), and thus conserves the redox energy in a proton gradient. The polypeptide is NADH-quinone oxidoreductase subunit B (Ruegeria sp. (strain TM1040) (Silicibacter sp.)).